We begin with the raw amino-acid sequence, 239 residues long: Host range factor p28 (239 aa).

Positions 21–131 constitute a KilA-N domain; sequence YIDEPNDIRL…QSILRGLVNW (111 aa). The RING-type zinc finger occupies 170-223; the sequence is CGICYEVVYSKRLENDRYFGLLDSCNHIFCITCINIWHKTRRETGASDNCPICR.

This sequence belongs to the orthopoxvirus OPG021 family.

It is found in the host cytoplasm. Its function is as follows. RING-finger E3 ubiquitin ligase which catalyzes the formation of both 'Lys-48'- and 'Lys-63'-linked polyubiquitin chains. Plays an important role in virulence by acting as an anti-apoptotic factor. The sequence is that of Host range factor p28 (OPG021) from Homo sapiens (Human).